Here is a 238-residue protein sequence, read N- to C-terminus: Large ribosomal subunit protein uL5c (238 aa).

This sequence belongs to the universal ribosomal protein uL5 family. In terms of assembly, part of the 50S ribosomal subunit; contacts the 5S rRNA.

The protein resides in the plastid. It localises to the chloroplast. Functionally, binds 5S rRNA, forms part of the central protuberance of the 50S subunit. The polypeptide is Large ribosomal subunit protein uL5c (rpl5) (Thalassiosira pseudonana (Marine diatom)).